The primary structure comprises 396 residues: Ribosomal RNA large subunit methyltransferase I (396 aa).

The region spanning threonine 2 to arginine 81 is the PUA domain.

The protein belongs to the methyltransferase superfamily. RlmI family.

It localises to the cytoplasm. The catalysed reaction is cytidine(1962) in 23S rRNA + S-adenosyl-L-methionine = 5-methylcytidine(1962) in 23S rRNA + S-adenosyl-L-homocysteine + H(+). Its function is as follows. Specifically methylates the cytosine at position 1962 (m5C1962) of 23S rRNA. This is Ribosomal RNA large subunit methyltransferase I from Erwinia tasmaniensis (strain DSM 17950 / CFBP 7177 / CIP 109463 / NCPPB 4357 / Et1/99).